Reading from the N-terminus, the 265-residue chain is Type 1 encapsulin shell protein (265 aa).

Residues 79–81, Trp87, and 90–94 contribute to the FMN site; these read RAT and DNLER. The interval 184-189 is pore-forming loop; sequence EAGHYP. An FMN-binding site is contributed by Glu235.

The protein belongs to the encapsulin family. Family 1 subfamily. Homomultimeric. This encapsulin nanocompartment is formed by 60 subunits; monomers form 12 pentamers which assemble to form shells. There are 12 pores where the pentamers meet as well as 3-fold axis channels and dimer channels; none are larger than 3-4 Angstroms in diameter. The N-terminus of the protein is inside the shell, the C-terminus is outside. Probably 3, 4 or 5 Flp cargo decamers bind inside the encapulin nanocompartment. Requires FMN as cofactor.

It localises to the encapsulin nanocompartment. Proteolysis activated by calcium and cobalt. Functionally, shell component of a type 1 encapsulin nanocompartment. Assembles into proteinaceous shells 23-24 nm in diameter with 2-2.5 nm thick walls. Cargo protein Flp (ferritin-like protein, probably stores iron) is targeted to the interior via its C-terminal extension; empty intact shells can be isolated in the absence of cargo protein. Fe(2+) may be able to pass though the 5-fold and dimer channels in the protein shell. Protease that exhibits activity toward chymotrypsin and trypsin substrates. Probably does not have antibacterial activity. The polypeptide is Type 1 encapsulin shell protein (Thermotoga maritima (strain ATCC 43589 / DSM 3109 / JCM 10099 / NBRC 100826 / MSB8)).